A 291-amino-acid polypeptide reads, in one-letter code: MSTKIDGKQIAAEIKTNLAERVNKLKAQGIQPGLGTLLVGEDPGSMKYVAGKHADCQEVGITSVKKELPADASFDDIAAAVRELNEDPACTGFIVQLPLPKGINENAIIDMIDPAKDADGMHPYNLGELVLHVRGDISTPLPCTPRGVLELLDAYDIDLNGKEVCVLGRGITIGRTIGLMLTRNAVNATVTLCHTGTRDVADHMRRADVIVAAMGSAGFVTPDKIKDGAVLVDVGVSRVYDEEAGRYRIKGDVDKACYDKASAYTPNPGGVGPMTRAMLLANVVEMAERHA.

NADP(+)-binding positions include 168–170 (GRG), T195, and V236.

This sequence belongs to the tetrahydrofolate dehydrogenase/cyclohydrolase family. Homodimer.

The catalysed reaction is (6R)-5,10-methylene-5,6,7,8-tetrahydrofolate + NADP(+) = (6R)-5,10-methenyltetrahydrofolate + NADPH. It catalyses the reaction (6R)-5,10-methenyltetrahydrofolate + H2O = (6R)-10-formyltetrahydrofolate + H(+). It functions in the pathway one-carbon metabolism; tetrahydrofolate interconversion. Catalyzes the oxidation of 5,10-methylenetetrahydrofolate to 5,10-methenyltetrahydrofolate and then the hydrolysis of 5,10-methenyltetrahydrofolate to 10-formyltetrahydrofolate. This is Bifunctional protein FolD from Bifidobacterium longum (strain DJO10A).